We begin with the raw amino-acid sequence, 250 residues long: Glycerol-1-phosphate phosphohydrolase 2 (250 aa).

Asp18 serves as the catalytic Nucleophile. Positions 18 and 20 each coordinate Mg(2+). Asp20 (proton donor) is an active-site residue. Residue Lys64 forms a Glycyl lysine isopeptide (Lys-Gly) (interchain with G-Cter in ubiquitin) linkage. A Phosphoserine modification is found at Ser90. Residue Lys144 forms a Glycyl lysine isopeptide (Lys-Gly) (interchain with G-Cter in ubiquitin) linkage. Asp179 contributes to the Mg(2+) binding site.

The protein belongs to the HAD-like hydrolase superfamily. DOG/GPP family. As to quaternary structure, monomer. Mg(2+) is required as a cofactor.

It localises to the cytoplasm. It is found in the nucleus. The enzyme catalyses sn-glycerol 1-phosphate + H2O = glycerol + phosphate. The catalysed reaction is sn-glycerol 3-phosphate + H2O = glycerol + phosphate. In terms of biological role, glycerol-1-phosphate phosphohydrolase involved in glycerol biosynthesis. Plays a role in osmoadaptation. The protein is Glycerol-1-phosphate phosphohydrolase 2 of Saccharomyces cerevisiae (strain ATCC 204508 / S288c) (Baker's yeast).